Consider the following 286-residue polypeptide: Glycine--tRNA ligase alpha subunit (286 aa).

The protein belongs to the class-II aminoacyl-tRNA synthetase family. As to quaternary structure, tetramer of two alpha and two beta subunits.

It is found in the cytoplasm. It catalyses the reaction tRNA(Gly) + glycine + ATP = glycyl-tRNA(Gly) + AMP + diphosphate. In Thermotoga neapolitana (strain ATCC 49049 / DSM 4359 / NBRC 107923 / NS-E), this protein is Glycine--tRNA ligase alpha subunit.